The chain runs to 616 residues: Methionine--tRNA ligase, chloroplastic/mitochondrial (616 aa).

The 'HIGH' region signature appears at 78–88 (YYVNAPPHMGS). The 'KMSKS' region motif lies at 366–370 (KMGKS). Lysine 369 contributes to the ATP binding site. The span at 582 to 593 (LNPEKEEDEKKP) shows a compositional bias: basic and acidic residues. Residues 582–602 (LNPEKEEDEKKPKVGKKTGKA) form a disordered region.

The protein belongs to the class-I aminoacyl-tRNA synthetase family.

It localises to the plastid. The protein resides in the chloroplast. The protein localises to the mitochondrion. It catalyses the reaction tRNA(Met) + L-methionine + ATP = L-methionyl-tRNA(Met) + AMP + diphosphate. This chain is Methionine--tRNA ligase, chloroplastic/mitochondrial, found in Arabidopsis thaliana (Mouse-ear cress).